Here is a 151-residue protein sequence, read N- to C-terminus: Dehydrin Rab16D (151 aa).

Residues 1–138 (MEYQGQHGGH…TADAGGEKKG (138 aa)) are disordered. Residues 39 to 51 (EPAREDKKTDGVL) show a composition bias toward basic and acidic residues. Composition is skewed to low complexity over residues 90-105 (GNNQ…TTTG) and 117-132 (IATG…TADA).

Belongs to the plant dehydrin family.

This is Dehydrin Rab16D (RAB16D) from Oryza sativa subsp. indica (Rice).